The sequence spans 173 residues: Shikimate kinase 1 (173 aa).

An ATP-binding site is contributed by 14–19 (GAGKST). Position 18 (serine 18) interacts with Mg(2+). 3 residues coordinate substrate: aspartate 36, arginine 60, and glycine 82. Arginine 120 serves as a coordination point for ATP. Position 140 (arginine 140) interacts with substrate. Position 157 (glutamine 157) interacts with ATP.

The protein belongs to the shikimate kinase family. Monomer. Mg(2+) is required as a cofactor.

Its subcellular location is the cytoplasm. The catalysed reaction is shikimate + ATP = 3-phosphoshikimate + ADP + H(+). Its pathway is metabolic intermediate biosynthesis; chorismate biosynthesis; chorismate from D-erythrose 4-phosphate and phosphoenolpyruvate: step 5/7. Its function is as follows. Catalyzes the specific phosphorylation of the 3-hydroxyl group of shikimic acid using ATP as a cosubstrate. This is Shikimate kinase 1 from Shigella boydii serotype 18 (strain CDC 3083-94 / BS512).